The following is a 172-amino-acid chain: 3-phenylpropionate/cinnamic acid dioxygenase subunit beta (172 aa).

This sequence belongs to the bacterial ring-hydroxylating dioxygenase beta subunit family. In terms of assembly, this dioxygenase system consists of four proteins: the two subunits of the hydroxylase component (HcaE and HcaF), a ferredoxin (HcaC) and a ferredoxin reductase (HcaD).

It carries out the reaction 3-phenylpropanoate + NADH + O2 + H(+) = 3-(cis-5,6-dihydroxycyclohexa-1,3-dien-1-yl)propanoate + NAD(+). It catalyses the reaction (E)-cinnamate + NADH + O2 + H(+) = (2E)-3-(cis-5,6-dihydroxycyclohexa-1,3-dien-1-yl)prop-2-enoate + NAD(+). It functions in the pathway aromatic compound metabolism; 3-phenylpropanoate degradation. Its function is as follows. Part of the multicomponent 3-phenylpropionate dioxygenase. Converts 3-phenylpropionic acid (PP) and cinnamic acid (CI) into 3-phenylpropionate-dihydrodiol (PP-dihydrodiol) and cinnamic acid-dihydrodiol (CI-dihydrodiol), respectively. In Escherichia coli O139:H28 (strain E24377A / ETEC), this protein is 3-phenylpropionate/cinnamic acid dioxygenase subunit beta.